The primary structure comprises 202 residues: MLDLLKVSITGDLSSGKTEACRVFQDLGAYVISADKVSHSFLVPHSHIGHRVIDLLGSDVVVDNAFDRKVIAEKVFDNLVLLQALEAILHPEVCRIIEEQYCLVAKENKYPLFIAEVPLLYEIQYANKFDRVILITADENTRRERFTRKTNCSDLNFYQRCARFSSNEEKMMHADIIIENNGTKEELRHKVEEYFYALKGAL.

One can recognise a DPCK domain in the interval 6-202; the sequence is KVSITGDLSS…EYFYALKGAL (197 aa). Residue 14-19 participates in ATP binding; the sequence is SSGKTE.

It belongs to the CoaE family.

Its subcellular location is the cytoplasm. The enzyme catalyses 3'-dephospho-CoA + ATP = ADP + CoA + H(+). Its pathway is cofactor biosynthesis; coenzyme A biosynthesis; CoA from (R)-pantothenate: step 5/5. Catalyzes the phosphorylation of the 3'-hydroxyl group of dephosphocoenzyme A to form coenzyme A. The sequence is that of Dephospho-CoA kinase from Chlamydia felis (strain Fe/C-56) (Chlamydophila felis).